We begin with the raw amino-acid sequence, 368 residues long: N-acetylneuraminate epimerase (368 aa).

An N-terminal signal peptide occupies residues 1-19 (MNKTITALAIIMASFAANA). 7 Kelch repeats span residues 40 to 84 (TVYI…AFID), 86 to 137 (NLYV…FVHN), 139 to 173 (KAYVTGGVNQNIFNGYFEDLNEAGKDSTAVDKINA), 174 to 219 (YYFD…VNKG), 222 to 265 (TWLI…VAGG), 287 to 336 (ENYQ…PWNN), and 338 to 367 (LLIIGGETAGGKAVTDSVFISVKDNKVTVQ). The active-site Proton acceptor is Glu-228.

This sequence belongs to the NanM family. In terms of assembly, homodimer.

The protein localises to the periplasm. It catalyses the reaction N-acetyl-alpha-neuraminate = N-acetyl-beta-neuraminate. In terms of biological role, converts alpha-N-acetylneuranimic acid (Neu5Ac) to the beta-anomer, accelerating the equilibrium between the alpha- and beta-anomers. Probably facilitates sialidase-negative bacteria to compete successfully for limited amounts of extracellular Neu5Ac, which is likely taken up in the beta-anomer. In addition, the rapid removal of sialic acid from solution might be advantageous to the bacterium to damp down host responses. The protein is N-acetylneuraminate epimerase of Escherichia coli O139:H28 (strain E24377A / ETEC).